A 776-amino-acid polypeptide reads, in one-letter code: Bifunctional lysine-specific demethylase and histidyl-hydroxylase NO66 (776 aa).

Disordered stretches follow at residues 1–57 (MGKK…EPKF), 87–126 (EQNG…AHKH), and 165–288 (ILDE…DDEG). Basic and acidic residues-rich tracts occupy residues 47-57 (HYKEPSKEPKF) and 98-119 (EISP…DGVA). Positions 166-204 (LDEEVEDEEIDEEEFEDEEEVEDEEGMDEDETEIDESEM) are enriched in acidic residues. Residues 206–216 (VDPKDIERCIE) are compositionally biased toward basic and acidic residues. A compositionally biased stretch (acidic residues) spans 217–288 (FEDVDDEDEM…EMDADSDDEG (72 aa)). One can recognise a JmjC domain in the interval 425 to 569 (QLVNPQTFDD…NLMEKVIPEA (145 aa)). Residues His-468, Asp-470, and His-535 each coordinate Fe cation.

Belongs to the ROX family. NO66 subfamily. The cofactor is Fe(2+).

It localises to the nucleus. It carries out the reaction N(6),N(6)-dimethyl-L-lysyl(36)-[histone H3] + 2 2-oxoglutarate + 2 O2 = L-lysyl(36)-[histone H3] + 2 formaldehyde + 2 succinate + 2 CO2. Its function is as follows. Oxygenase that can act as both a histone lysine demethylase and a ribosomal histidine hydroxylase. Specifically demethylates 'Lys-4' (H3K4me) and 'Lys-36' (H3K36me) of histone H3, thereby playing a central role in histone code. This Caenorhabditis briggsae protein is Bifunctional lysine-specific demethylase and histidyl-hydroxylase NO66 (jmjc-1).